Consider the following 668-residue polypeptide: Probable ATP-dependent RNA helicase ddx52 (668 aa).

The interval 37 to 174 (KQTKTNNKVH…TQEDKHKREI (138 aa)) is disordered. The span at 40-57 (KTNNKVHFFKNTTPSTPV) shows a compositional bias: polar residues. Over residues 59–69 (SKKDNIKQKKE) the composition is skewed to basic and acidic residues. Over residues 70–108 (EEEDNDNDNEESKEDDDFVEDDDNDDDDDDDDEDEENEE) the composition is skewed to acidic residues. Positions 109–120 (PKEKEFIKHQVN) are enriched in basic and acidic residues. Residues 138 to 147 (ENSDDSDDSD) show a composition bias toward acidic residues. Over residues 161–174 (VSKETQEDKHKREI) the composition is skewed to basic and acidic residues. The short motif at 199-227 (QLENRFKVRKYLLNNINEIGYKEPSPIQM) is the Q motif element. The region spanning 230 to 402 (IPILLKEREV…HSIMKNPIKI (173 aa)) is the Helicase ATP-binding domain. 243–250 (APTGSGKT) contributes to the ATP binding site. The DEAD box motif lies at 349-352 (DEAD). In terms of domain architecture, Helicase C-terminal spans 413–574 (TVDQKLIYVG…HVPDWMLNLK (162 aa)). Residues 601-668 (RTSSKFKLRK…KQIKKPKKII (68 aa)) are disordered. Residues 604-613 (SKFKLRKNKK) are compositionally biased toward basic residues. Over residues 624–636 (SNENNNNNNNNNN) the composition is skewed to low complexity. The span at 659-668 (KQIKKPKKII) shows a compositional bias: basic residues.

This sequence belongs to the DEAD box helicase family. DDX52/ROK1 subfamily.

Its subcellular location is the nucleus. The protein localises to the nucleolus. The catalysed reaction is ATP + H2O = ADP + phosphate + H(+). In terms of biological role, ATP-binding RNA helicase which may be involved in the ribosome biogenesis. This Dictyostelium discoideum (Social amoeba) protein is Probable ATP-dependent RNA helicase ddx52 (ddx52).